The following is a 617-amino-acid chain: V-type proton ATPase catalytic subunit A (617 aa).

Threonine 136 bears the Phosphothreonine mark. 250–257 (GAFGCGKT) lines the ATP pocket. Residue serine 384 is modified to Phosphoserine; by AMPK.

This sequence belongs to the ATPase alpha/beta chains family. In terms of assembly, V-ATPase is a heteromultimeric enzyme made up of two complexes: the ATP-hydrolytic V1 complex and the proton translocation V0 complex. The V1 complex consists of three catalytic AB heterodimers that form a heterohexamer, three peripheral stalks each consisting of EG heterodimers, one central rotor including subunits D and F, and the regulatory subunits C and H. The proton translocation complex V0 consists of the proton transport subunit a, a ring of proteolipid subunits c9c'', rotary subunit d, subunits e and f, and the accessory subunits ATP6AP1/Ac45 and ATP6AP2/PRR. Interacts with the V0 complex V-ATPase subunit a4 ATP6V0A4. Interacts with WFS1. Interacts with alpha-crystallin B chain/CRYAB and with MTOR, forming a ternary complex. Phosphorylation at Ser-384 by AMPK down-regulates its enzyme activity. As to expression, expressed in brain (at protein level).

It localises to the cytoplasm. Its subcellular location is the cytosol. The protein localises to the cytoplasmic vesicle. It is found in the secretory vesicle. The protein resides in the clathrin-coated vesicle membrane. It localises to the lysosome. It catalyses the reaction ATP + H2O + 4 H(+)(in) = ADP + phosphate + 5 H(+)(out). Its activity is regulated as follows. ATP hydrolysis occurs at the interface between the nucleotide-binding domains of subunits A and B. ATP hydrolysis triggers a conformational change in the subunits D and F, which induces a shift of subunit d. The c-ring is subsequently rotated and results in a continuous proton translocation across the membrane. The V-ATPase is inhibited by bafilomycin A. Catalytic subunit of the V1 complex of vacuolar(H+)-ATPase (V-ATPase), a multisubunit enzyme composed of a peripheral complex (V1) that hydrolyzes ATP and a membrane integral complex (V0) that translocates protons. V-ATPase is responsible for acidifying and maintaining the pH of intracellular compartments and in some cell types, is targeted to the plasma membrane, where it is responsible for acidifying the extracellular environment. In aerobic conditions, involved in intracellular iron homeostasis, thus triggering the activity of Fe(2+) prolyl hydroxylase (PHD) enzymes, and leading to HIF1A hydroxylation and subsequent proteasomal degradation. May play a role in neurite development and synaptic connectivity. This is V-type proton ATPase catalytic subunit A (ATP6V1A) from Bos taurus (Bovine).